A 610-amino-acid chain; its full sequence is Sodium-coupled monocarboxylate transporter 1 (610 aa).

Topologically, residues 1–9 are extracellular; the sequence is MDTPRGIGT. The helical transmembrane segment at 10-30 threads the bilayer; it reads FVVWDYVVFAGMLVISAAIGI. Over 31 to 51 the chain is Cytoplasmic; it reads YYAFAGGGQQTSKDFLMGGRR. Residues 52-72 traverse the membrane as a helical segment; that stretch reads MTAVPVALSLTASFMSAVTVL. The Extracellular portion of the chain corresponds to 73 to 83; sequence GTPSEVYRFGA. A helical membrane pass occupies residues 84-104; the sequence is IFSIFAFTYFFVVVISAEVFL. Topologically, residues 105–132 are cytoplasmic; that stretch reads PVFYKLGITSTYEYLELRFNKCVRLCGT. A helical membrane pass occupies residues 133 to 153; sequence VLFIVQTILYTGIVIYAPALA. The Extracellular segment spans residues 154-161; the sequence is LNQVTGFD. Residues 162 to 182 traverse the membrane as a helical segment; the sequence is LWGAVVATGVVCTFYCTLGGL. Topologically, residues 183 to 189 are cytoplasmic; it reads KAVIWTD. A helical membrane pass occupies residues 190–210; sequence VFQVGIMVAGFASVIIQAVVM. Over 211–239 the chain is Extracellular; sequence QGGISTILNDAYDGGRLNFWNFNPNPLQR. The helical transmembrane segment at 240–260 threads the bilayer; sequence HTFWTIIIGGTFTWTSIYGVN. The Cytoplasmic segment spans residues 261–279; sequence QSQVQRYISCKSRFQAKLS. The helical transmembrane segment at 280–300 threads the bilayer; the sequence is LYINLVGLWAILTCSVFCGLA. Residues 301 to 336 lie on the Extracellular side of the membrane; it reads LYSRYHDCDPWTAKKVSAPDQLMPYLVLDILQDYPG. The chain crosses the membrane as a helical span at residues 337–359; it reads LPGLFVACAYSGTLSTVSSSINA. Over 360–389 the chain is Cytoplasmic; it reads LAAVTVEDLIKPYFRSLSERSLSWISQGMS. Residues 390 to 410 form a helical membrane-spanning segment; the sequence is VVYGALCIGMAALASLMGALL. Topologically, residues 411 to 415 are extracellular; it reads QAALS. Residues 416 to 436 form a helical membrane-spanning segment; sequence VFGMVGGPLMGLFALGILVPF. At 437–439 the chain is on the cytoplasmic side; that stretch reads ANS. A helical transmembrane segment spans residues 440-460; the sequence is IGALVGLMAGFAISLWVGIGA. Topologically, residues 461–518 are extracellular; sequence QIYPPLPERTLPLHLDIQGCNSTYNETNLMTTTEMPFTTSVFQIYNVQRTPLMDNWYS. An N-linked (GlcNAc...) asparagine glycan is attached at N485. The helical transmembrane segment at 519 to 539 threads the bilayer; the sequence is LSYLYFSTVGTLVTLLVGILV. Topologically, residues 540–610 are cytoplasmic; it reads SLSTGGRKQN…QSGKSNGTRL (71 aa). The disordered stretch occupies residues 585–610; the sequence is GGTDNPAFNHIELNSDQSGKSNGTRL. Residues 596 to 610 are compositionally biased toward polar residues; that stretch reads ELNSDQSGKSNGTRL. Positions 608 to 610 match the PDZ-binding motif; it reads TRL.

This sequence belongs to the sodium:solute symporter (SSF) (TC 2.A.21) family. Interacts (via PDZ-binding motif) with PDZK1 (via PDZ domains 1 and 3); interaction increases nicotinate transport activity of SLC5A8. Expressed in normal thyroid, localized at the apical pole of thyroid cells facing the colloid lumen, but expression profoundly decreased in thyroid carcinomas. Expressed in normal colon but absent in colon aberrant crypt foci and colon cancers. Present in normal kidney cortex, brain, prostate, gastric mucosa and breast tissue but was significantly down-regulated in primary gliomas, gastric cancer, prostate tumors and breast tumors.

Its subcellular location is the apical cell membrane. It catalyses the reaction (S)-lactate(out) + 2 Na(+)(out) = (S)-lactate(in) + 2 Na(+)(in). The catalysed reaction is propanoate(out) + 2 Na(+)(out) = propanoate(in) + 2 Na(+)(in). The enzyme catalyses pyruvate(out) + 2 Na(+)(out) = pyruvate(in) + 2 Na(+)(in). It carries out the reaction acetate(out) + 2 Na(+)(out) = acetate(in) + 2 Na(+)(in). It catalyses the reaction butanoate(out) + 2 Na(+)(out) = butanoate(in) + 2 Na(+)(in). The catalysed reaction is nicotinate(out) + 2 Na(+)(out) = nicotinate(in) + 2 Na(+)(in). The enzyme catalyses (R)-3-hydroxybutanoate(out) + 2 Na(+)(out) = (R)-3-hydroxybutanoate(in) + 2 Na(+)(in). It carries out the reaction acetoacetate(out) + 2 Na(+)(out) = acetoacetate(in) + 2 Na(+)(in). It catalyses the reaction 4-methyl-2-oxopentanoate(out) + 2 Na(+)(out) = 4-methyl-2-oxopentanoate(in) + 2 Na(+)(in). The catalysed reaction is 5-oxo-L-proline(out) + 2 Na(+)(out) = 5-oxo-L-proline(in) + 2 Na(+)(in). The enzyme catalyses iodide(out) = iodide(in). It carries out the reaction chloride(in) = chloride(out). It catalyses the reaction nitrate(in) = nitrate(out). The catalysed reaction is bromide(in) = bromide(out). Increase of iodide influx inhibited by addition of perchlorate (NaClO(4)), a competitive inhibitor of iodide uptake catalyzed by sodium iodide symporter (NIS). Cotransport of monocarboxylates and nicotinate strongly inhibited by probenecid, nonsteroid anti-inflammatory drugs (ibuprofen, fenoprofen, ketprofen, naproxen) in a Na(+)-dependent manner or by prolonged exposure to external concentrations of monocarboxylates. Functionally, acts as an electrogenic sodium (Na(+)) and chloride (Cl-)-dependent sodium-coupled solute transporter, including transport of monocarboxylates (short-chain fatty acids including L-lactate, D-lactate, pyruvate, acetate, propionate, valerate and butyrate), mocarboxylate drugs (nicotinate, benzoate, salicylate and 5-aminosalicylate) and ketone bodies (beta-D-hydroxybutyrate, acetoacetate and alpha-ketoisocaproate), with a Na(+):substrate stoichiometry of between 4:1 and 2:1. Catalyzes passive carrier mediated diffusion of iodide. Mediates iodide transport from the thyrocyte into the colloid lumen through the apical membrane. May be responsible for the absorption of D-lactate and monocarboxylate drugs from the intestinal tract. Acts as a tumor suppressor, suppressing colony formation in colon cancer, prostate cancer and glioma cell lines. May play a critical role in the entry of L-lactate and ketone bodies into neurons by a process driven by an electrochemical Na(+) gradient and hence contribute to the maintenance of the energy status and function of neurons. Mediates sodium-coupled electrogenic transport of pyroglutamate (5-oxo-L-proline). Can mediate the transport of chloride, bromide, iodide and nitrate ions when the external concentration of sodium ions is reduced. In Homo sapiens (Human), this protein is Sodium-coupled monocarboxylate transporter 1.